The following is a 247-amino-acid chain: Neurotrophic factor BDNF precursor form (247 aa).

The first 18 residues, 1–18 (MTILFLTMVISYFGCMKA), serve as a signal peptide directing secretion. The propeptide occupies 19–128 (APMKEANVRG…AANMSMRVRR (110 aa)). Asn-121 is a glycosylation site (N-linked (GlcNAc...) asparagine). Cystine bridges form between Cys-141/Cys-208, Cys-186/Cys-237, and Cys-196/Cys-239.

This sequence belongs to the NGF-beta family. As to quaternary structure, monomers and homodimers. Binds to NTRK2/TRKB. Can form heterodimers with other neurotrophin family members, such as NTF3 and NTF4 (in vitro), but the physiological relevance of this is not clear. BDNF precursor form: interacts with the heterodimer formed by NGFR and SORCS2. Mature BDNF has much lower affinity for the heterodimer formed by NGFR and SORCS2. In terms of processing, N-glycosylated and glycosulfated, contrary to mature BDNF. Mature BDNF is produced by proteolytic removal of the propeptide, catalyzed by a FURIN family member. In addition, the precursor form is proteolytically cleaved within the propeptide, but this is not an obligatory intermediate for the production of mature BDNF. Can be converted into mature BDNF by plasmin (PLG).

It is found in the secreted. In terms of biological role, important signaling molecule that activates signaling cascades downstream of NTRK2. During development, promotes the survival and differentiation of selected neuronal populations of the peripheral and central nervous systems. Participates in axonal growth, pathfinding and in the modulation of dendritic growth and morphology. Major regulator of synaptic transmission and plasticity at adult synapses in many regions of the CNS. The versatility of BDNF is emphasized by its contribution to a range of adaptive neuronal responses including long-term potentiation (LTP), long-term depression (LTD), certain forms of short-term synaptic plasticity, as well as homeostatic regulation of intrinsic neuronal excitability. Functionally, important signaling molecule that activates signaling cascades downstream of NTRK2. Activates signaling cascades via the heterodimeric receptor formed by NGFR and SORCS2. Signaling via NGFR and SORCS2 plays a role in synaptic plasticity and long-term depression (LTD). Binding to NGFR and SORCS2 promotes neuronal apoptosis. Promotes neuronal growth cone collapse. The protein is Neurotrophic factor BDNF precursor form (BDNF) of Ailuropoda melanoleuca (Giant panda).